The primary structure comprises 210 residues: MADKSEMKKLLLTPVLGNNPIALQVLGVCSALAVTSQMKTAFVMTLAVTAVTAFSNLFISLIRNQIPNSVRIIAQMAVIASLVIVVDQVLKAYAYDISKQLSVFVGLIITNCIVMGRAEAYAMKSAPLPSFLDGIGNGLGYGAVLLTVATVREILGSGTWFGIELLPLVNNGGWYVPNGLLLLPPSAFFIIGLIIWGVRTKDPKQVEAKD.

Helical transmembrane passes span 42–62 (FVMT…ISLI), 72–92 (IIAQ…VLKA), 103–123 (VFVG…AYAM), 131–151 (FLDG…VATV), and 178–198 (NGLL…IWGV).

This sequence belongs to the NqrDE/RnfAE family. As to quaternary structure, composed of six subunits; NqrA, NqrB, NqrC, NqrD, NqrE and NqrF.

The protein resides in the cell inner membrane. It catalyses the reaction a ubiquinone + n Na(+)(in) + NADH + H(+) = a ubiquinol + n Na(+)(out) + NAD(+). Its function is as follows. NQR complex catalyzes the reduction of ubiquinone-1 to ubiquinol by two successive reactions, coupled with the transport of Na(+) ions from the cytoplasm to the periplasm. NqrA to NqrE are probably involved in the second step, the conversion of ubisemiquinone to ubiquinol. The chain is Na(+)-translocating NADH-quinone reductase subunit D from Aeromonas hydrophila subsp. hydrophila (strain ATCC 7966 / DSM 30187 / BCRC 13018 / CCUG 14551 / JCM 1027 / KCTC 2358 / NCIMB 9240 / NCTC 8049).